Here is a 328-residue protein sequence, read N- to C-terminus: MNRKKIIVAVVIVALLAAIGYGWSYYRQQQDATLTLYGNVDIRTVNLGFRVSGRLASLAVDEGDKIQPGEVLGKLDDGPYVNALKQAQANVQSAQAQLALLKAGYREEEIAQVRSEVSQREAAFSYADSFLKRQQGLWANKATSANELENARTARNQAQANLQASKDKLAQYLSGNRPQEIAQAEANLAQSEAELAQAQLNLQDTTLLSPSGGTVLTRAVEPGTILSASNTVFTLSLTDPVWVRAYVSERHLGQAIPGTEVEVFTDGRPDKPYHGKIGFVSPTAEFTPKSVETPDLRTDLVYRLRIIITDADESLRQGMPVTVRFVQP.

A signal peptide spans 1–22 (MNRKKIIVAVVIVALLAAIGYG). Coiled coils occupy residues 80-109 (YVNALKQAQANVQSAQAQLALLKAGYREEE) and 139-208 (ANKA…TTLL).

This sequence belongs to the UPF0194 family.

It localises to the periplasm. The polypeptide is UPF0194 membrane protein YE2891 (Yersinia enterocolitica serotype O:8 / biotype 1B (strain NCTC 13174 / 8081)).